Consider the following 443-residue polypeptide: Differentially expressed in FDCP 8 homolog B (443 aa).

The tract at residues 14–49 is disordered; it reads HLNPFDKKGGAERHPADSETQPCKDSSTSSPLSVPE. Positions 17 to 30 are enriched in basic and acidic residues; that stretch reads PFDKKGGAERHPAD. The span at 31–45 shows a compositional bias: polar residues; it reads SETQPCKDSSTSSPL. 2 Phorbol-ester/DAG-type zinc fingers span residues 134-185 and 364-424; these read EHRF…TKPC and IHTT…STSC.

This sequence belongs to the DEF8 family.

Functionally, positively regulates lysosome peripheral distribution and ruffled border formation in osteoclasts. Involved in bone resorption. The protein is Differentially expressed in FDCP 8 homolog B (def8-b) of Xenopus laevis (African clawed frog).